A 414-amino-acid chain; its full sequence is L-cysteine:1D-myo-inositol 2-amino-2-deoxy-alpha-D-glucopyranoside ligase (414 aa).

Cysteine 44 contributes to the Zn(2+) binding site. Residues 44-47 (CGIT), threonine 59, and 82-84 (NIT) contribute to the L-cysteinyl-5'-AMP site. Residues 46 to 56 (ITPYDSTHLGH) carry the 'HIGH' region motif. A 'ERGGDP' region motif is present at residues 188 to 193 (ERGGDP). Tryptophan 228 lines the L-cysteinyl-5'-AMP pocket. Cysteine 232 is a binding site for Zn(2+). 250 to 252 (GSD) provides a ligand contact to L-cysteinyl-5'-AMP. Residue histidine 257 participates in Zn(2+) binding. Residue isoleucine 284 coordinates L-cysteinyl-5'-AMP. Positions 290 to 294 (KMSKS) match the 'KMSKS' region motif.

The protein belongs to the class-I aminoacyl-tRNA synthetase family. MshC subfamily. Monomer. It depends on Zn(2+) as a cofactor.

It catalyses the reaction 1D-myo-inositol 2-amino-2-deoxy-alpha-D-glucopyranoside + L-cysteine + ATP = 1D-myo-inositol 2-(L-cysteinylamino)-2-deoxy-alpha-D-glucopyranoside + AMP + diphosphate + H(+). Functionally, catalyzes the ATP-dependent condensation of GlcN-Ins and L-cysteine to form L-Cys-GlcN-Ins. The protein is L-cysteine:1D-myo-inositol 2-amino-2-deoxy-alpha-D-glucopyranoside ligase of Corynebacterium aurimucosum (strain ATCC 700975 / DSM 44827 / CIP 107346 / CN-1) (Corynebacterium nigricans).